Here is a 375-residue protein sequence, read N- to C-terminus: 23S rRNA (uracil(747)-C(5))-methyltransferase RlmC (375 aa).

The [4Fe-4S] cluster site is built by cysteine 3, cysteine 11, cysteine 14, and cysteine 87. Glutamine 212, phenylalanine 241, glutamate 262, and asparagine 307 together coordinate S-adenosyl-L-methionine. The active-site Nucleophile is the cysteine 334.

It belongs to the class I-like SAM-binding methyltransferase superfamily. RNA M5U methyltransferase family. RlmC subfamily.

The enzyme catalyses uridine(747) in 23S rRNA + S-adenosyl-L-methionine = 5-methyluridine(747) in 23S rRNA + S-adenosyl-L-homocysteine + H(+). Functionally, catalyzes the formation of 5-methyl-uridine at position 747 (m5U747) in 23S rRNA. This chain is 23S rRNA (uracil(747)-C(5))-methyltransferase RlmC, found in Escherichia coli (strain SE11).